The chain runs to 449 residues: Neurexin-1a-beta (449 aa).

An N-terminal signal peptide occupies residues 1 to 38 (MLRLWPGGAPGGLASILLRISLRLALWLPPLTLGSALA). Topologically, residues 39–373 (EGPGELYVPQ…EVIRESSSTT (335 aa)) are extracellular. The Laminin G-like domain maps to 71–272 (TTYIFGRDGG…DPNVRVEGSA (202 aa)). Positions 276–366 (GDMPSSSITP…AKGYPSPEVI (91 aa)) are disordered. Low complexity predominate over residues 280 to 311 (SSSITPQSSVSAAGNRSETSPSITDITTTTAS). Residues 312–322 (NRQGKQTTTPQ) are compositionally biased toward polar residues. A helical membrane pass occupies residues 374-394 (GMVVGIVAAAALCILILLYAM). Residues 395–449 (YKYRNRDEGSYHVDESRNYISNSATQPNGAAVKEKPIGVPKNKKDKKNKDKEYYV) lie on the Cytoplasmic side of the membrane. Positions 415–449 (SNSATQPNGAAVKEKPIGVPKNKKDKKNKDKEYYV) are disordered.

It belongs to the neurexin family.

The protein resides in the membrane. Functionally, neuronal cell surface protein that may be involved in cell recognition and cell adhesion. May play a role in formation or maintenance of synaptic junctions. The polypeptide is Neurexin-1a-beta (nrxn1a) (Danio rerio (Zebrafish)).